We begin with the raw amino-acid sequence, 58 residues long: SPbeta prophage-derived uncharacterized protein YonT (58 aa).

The helical transmembrane segment at 6-26 (GIVVAFLISLTVLTINSLTIV) threads the bilayer. The interval 35–58 (GTSKKKKRIRKRLRPKRQRQRIRR) is disordered. The span at 36–58 (TSKKKKRIRKRLRPKRQRQRIRR) shows a compositional bias: basic residues.

Its subcellular location is the cell membrane. This Bacillus subtilis (strain 168) protein is SPbeta prophage-derived uncharacterized protein YonT (yonT).